Here is a 225-residue protein sequence, read N- to C-terminus: MALWGWRGVGRRPTFFVFASLAPIGRDFLRRNGDDARMMGHLEKLLAPTLDAMGYEVVRVTLLGSQNPTLQVMAERLDGVAMTVSDCETISRALGALLDVEDPIAGRYSLEISSPGIDRPLTRPKDYARFAGHEARIETDRLIEGHRRMKGLLLGIDEDRTVRLRLIEGKAAEDGTLPEVEIPFGAIVKAKLLLTDALIAKALKDAEALADEGEAAGGAVEGGVA.

Belongs to the RimP family.

Its subcellular location is the cytoplasm. Functionally, required for maturation of 30S ribosomal subunits. This Rhodospirillum rubrum (strain ATCC 11170 / ATH 1.1.1 / DSM 467 / LMG 4362 / NCIMB 8255 / S1) protein is Ribosome maturation factor RimP.